The following is an 87-amino-acid chain: Small ribosomal subunit protein uS17 (87 aa).

It belongs to the universal ribosomal protein uS17 family. In terms of assembly, part of the 30S ribosomal subunit.

Its function is as follows. One of the primary rRNA binding proteins, it binds specifically to the 5'-end of 16S ribosomal RNA. The sequence is that of Small ribosomal subunit protein uS17 from Staphylococcus haemolyticus (strain JCSC1435).